The following is a 396-amino-acid chain: Elongation factor Tu (396 aa).

One can recognise a tr-type G domain in the interval 10–206 (KPHVNVGTIG…ALDDYIPEPE (197 aa)). The G1 stretch occupies residues 19–26 (GHVDHGKT). GTP is bound at residue 19–26 (GHVDHGKT). A Mg(2+)-binding site is contributed by threonine 26. The interval 60–64 (GITIA) is G2. The interval 81 to 84 (DCPG) is G3. Residues 81-85 (DCPGH) and 136-139 (NKAD) contribute to the GTP site. The segment at 136 to 139 (NKAD) is G4. The interval 174–176 (SAL) is G5.

Belongs to the TRAFAC class translation factor GTPase superfamily. Classic translation factor GTPase family. EF-Tu/EF-1A subfamily. As to quaternary structure, monomer.

The protein localises to the cytoplasm. The catalysed reaction is GTP + H2O = GDP + phosphate + H(+). Functionally, GTP hydrolase that promotes the GTP-dependent binding of aminoacyl-tRNA to the A-site of ribosomes during protein biosynthesis. The protein is Elongation factor Tu of Methylococcus capsulatus (strain ATCC 33009 / NCIMB 11132 / Bath).